The sequence spans 441 residues: Trigger factor (441 aa).

The PPIase FKBP-type domain maps to 161–246; sequence GDMVTVDFQG…VKDVKERILA (86 aa).

The protein belongs to the FKBP-type PPIase family. Tig subfamily.

The protein localises to the cytoplasm. It carries out the reaction [protein]-peptidylproline (omega=180) = [protein]-peptidylproline (omega=0). Its function is as follows. Involved in protein export. Acts as a chaperone by maintaining the newly synthesized protein in an open conformation. Functions as a peptidyl-prolyl cis-trans isomerase. This Desulfotalea psychrophila (strain LSv54 / DSM 12343) protein is Trigger factor.